The primary structure comprises 177 residues: Cyclic pyranopterin monophosphate synthase (177 aa).

Substrate contacts are provided by residues 89–91 (LCH) and 125–126 (ME). Residue Asp140 is part of the active site.

It belongs to the MoaC family. Homohexamer; trimer of dimers.

The catalysed reaction is (8S)-3',8-cyclo-7,8-dihydroguanosine 5'-triphosphate = cyclic pyranopterin phosphate + diphosphate. Its pathway is cofactor biosynthesis; molybdopterin biosynthesis. In terms of biological role, catalyzes the conversion of (8S)-3',8-cyclo-7,8-dihydroguanosine 5'-triphosphate to cyclic pyranopterin monophosphate (cPMP). The chain is Cyclic pyranopterin monophosphate synthase from Streptomyces griseus subsp. griseus (strain JCM 4626 / CBS 651.72 / NBRC 13350 / KCC S-0626 / ISP 5235).